The primary structure comprises 120 residues: MSAQEIIRSIEAEQLKSNLPDIYVGDTVKVGVKIKEGEKYRVQPYEGVVIAKRNGGINETITVRKVFQGVGVERVFLLHSPRIDSIKVLRRGKVRRAKLYYLRDRVGKATRIKQRFDRPL.

The protein belongs to the bacterial ribosomal protein bL19 family.

Its function is as follows. This protein is located at the 30S-50S ribosomal subunit interface and may play a role in the structure and function of the aminoacyl-tRNA binding site. This Nostoc punctiforme (strain ATCC 29133 / PCC 73102) protein is Large ribosomal subunit protein bL19.